Here is a 184-residue protein sequence, read N- to C-terminus: Elongation factor P (184 aa).

The protein belongs to the elongation factor P family.

The protein localises to the cytoplasm. It functions in the pathway protein biosynthesis; polypeptide chain elongation. Involved in peptide bond synthesis. Stimulates efficient translation and peptide-bond synthesis on native or reconstituted 70S ribosomes in vitro. Probably functions indirectly by altering the affinity of the ribosome for aminoacyl-tRNA, thus increasing their reactivity as acceptors for peptidyl transferase. This chain is Elongation factor P, found in Mycoplasma mycoides subsp. mycoides SC (strain CCUG 32753 / NCTC 10114 / PG1).